Here is a 304-residue protein sequence, read N- to C-terminus: N-acetyl-D-glucosamine kinase (304 aa).

ATP contacts are provided by residues 4–11 and 133–140; these read GFDMGGTK and GVGGGLIV. Zn(2+) is bound by residues H157, C177, C179, and C184.

Belongs to the ROK (NagC/XylR) family. NagK subfamily.

The enzyme catalyses N-acetyl-D-glucosamine + ATP = N-acetyl-D-glucosamine 6-phosphate + ADP + H(+). It functions in the pathway cell wall biogenesis; peptidoglycan recycling. In terms of biological role, catalyzes the phosphorylation of N-acetyl-D-glucosamine (GlcNAc) derived from cell-wall degradation, yielding GlcNAc-6-P. In Yersinia pseudotuberculosis serotype O:3 (strain YPIII), this protein is N-acetyl-D-glucosamine kinase.